The chain runs to 137 residues: MTLTVRVISPDKTVWDAPAEEVVLPSTTGQLGILTGHAPLLTALDTGVMRVRAAKNQNWEAIALLGGFAEVEENEVTILVNGAERGDKINLEEARAAYNKAEAGLNQVSSEDRQAQIKANQAFKRARARFQAAGGLV.

The protein belongs to the ATPase epsilon chain family. In terms of assembly, F-type ATPases have 2 components, CF(1) - the catalytic core - and CF(0) - the membrane proton channel. CF(1) has five subunits: alpha(3), beta(3), gamma(1), delta(1), epsilon(1). CF(0) has three main subunits: a, b and c.

It is found in the cellular thylakoid membrane. Functionally, produces ATP from ADP in the presence of a proton gradient across the membrane. The sequence is that of ATP synthase epsilon chain from Nostoc punctiforme (strain ATCC 29133 / PCC 73102).